Consider the following 471-residue polypeptide: Glutamate--tRNA ligase (471 aa).

The short motif at 9–19 is the 'HIGH' region element; sequence PSPTGFLHVGG. Positions 98, 100, 125, and 127 each coordinate Zn(2+). A 'KMSKS' region motif is present at residues 237-241; the sequence is KLSKR. K240 contacts ATP.

Belongs to the class-I aminoacyl-tRNA synthetase family. Glutamate--tRNA ligase type 1 subfamily. In terms of assembly, monomer. It depends on Zn(2+) as a cofactor.

It localises to the cytoplasm. It carries out the reaction tRNA(Glu) + L-glutamate + ATP = L-glutamyl-tRNA(Glu) + AMP + diphosphate. Catalyzes the attachment of glutamate to tRNA(Glu) in a two-step reaction: glutamate is first activated by ATP to form Glu-AMP and then transferred to the acceptor end of tRNA(Glu). This is Glutamate--tRNA ligase from Aeromonas salmonicida (strain A449).